The primary structure comprises 379 residues: MPLSRSLLSRRISNSFRFHQGETTTAPESESIPPPSNMAGSSSWSAMLPELLGEIIRRVEETEDRWPQRRDVVTCACVSKKWREITHDFARSSLNSGKITFPSCLKLPGPRDFSNQCLIKRNKKTSTFYLYLALTPSFTDKGKFLLAARRFRTGAYTEYIISLDADDFSQGSNAYVGKLRSDFLGTNFTVYDSQPPHNGAKPSNGKASRRFASKQISPQVPAGNFEVGHVSYKFNLLKSRGPRRMVSTLRCPSPSPSSSSAGLSSDQKPCDVTKIMKKPNKDGSSLTILKNKAPRWHEHLQCWCLNFHGRVTVASVKNFQLVATVDQSQPSGKGDEETVLLQFGKVGDDTFTMDYRQPLSAFQAFAICLTSFGTKLACE.

Polar residues predominate over residues 18–28; sequence FHQGETTTAPE. The tract at residues 18-41 is disordered; the sequence is FHQGETTTAPESESIPPPSNMAGS. One can recognise an F-box domain in the interval 42-97; the sequence is SSWSAMLPELLGEIIRRVEETEDRWPQRRDVVTCACVSKKWREITHDFARSSLNSG. Disordered regions lie at residues 193–212 and 248–278; these read SQPP…RRFA and TLRC…IMKK.

The protein belongs to the TUB family. In terms of tissue distribution, ubiquitous.

The polypeptide is Tubby-like F-box protein 7 (Arabidopsis thaliana (Mouse-ear cress)).